A 489-amino-acid polypeptide reads, in one-letter code: Probable cytosol aminopeptidase (489 aa).

Mn(2+) contacts are provided by K254 and D259. K266 is an active-site residue. The Mn(2+) site is built by D277, D336, and E338. R340 is a catalytic residue.

Belongs to the peptidase M17 family. The cofactor is Mn(2+).

It is found in the cytoplasm. It catalyses the reaction Release of an N-terminal amino acid, Xaa-|-Yaa-, in which Xaa is preferably Leu, but may be other amino acids including Pro although not Arg or Lys, and Yaa may be Pro. Amino acid amides and methyl esters are also readily hydrolyzed, but rates on arylamides are exceedingly low.. The enzyme catalyses Release of an N-terminal amino acid, preferentially leucine, but not glutamic or aspartic acids.. Presumably involved in the processing and regular turnover of intracellular proteins. Catalyzes the removal of unsubstituted N-terminal amino acids from various peptides. In Cereibacter sphaeroides (strain ATCC 17025 / ATH 2.4.3) (Rhodobacter sphaeroides), this protein is Probable cytosol aminopeptidase.